The sequence spans 452 residues: Pup--protein ligase (452 aa).

Glu9 provides a ligand contact to Mg(2+). Arg53 contributes to the ATP binding site. Position 55 (Tyr55) interacts with Mg(2+). Catalysis depends on Asp57, which acts as the Proton acceptor. Mg(2+) is bound at residue Glu63. ATP contacts are provided by Thr66 and Trp419.

This sequence belongs to the Pup ligase/Pup deamidase family. Pup-conjugating enzyme subfamily.

The enzyme catalyses ATP + [prokaryotic ubiquitin-like protein]-L-glutamate + [protein]-L-lysine = ADP + phosphate + N(6)-([prokaryotic ubiquitin-like protein]-gamma-L-glutamyl)-[protein]-L-lysine.. The protein operates within protein degradation; proteasomal Pup-dependent pathway. Its pathway is protein modification; protein pupylation. In terms of biological role, catalyzes the covalent attachment of the prokaryotic ubiquitin-like protein modifier Pup to the proteasomal substrate proteins, thereby targeting them for proteasomal degradation. This tagging system is termed pupylation. The ligation reaction involves the side-chain carboxylate of the C-terminal glutamate of Pup and the side-chain amino group of a substrate lysine. The polypeptide is Pup--protein ligase (Mycobacterium leprae (strain Br4923)).